Here is a 214-residue protein sequence, read N- to C-terminus: Chalcone isomerase-like protein 1 (214 aa).

This sequence belongs to the chalcone isomerase family. As to expression, mostly expressed in glandular trichomes (lupulin glands), and, to a lower extent, in cones, cones bracts, leaves, stems and roots.

The protein localises to the cytoplasm. The catalysed reaction is a chalcone = a flavanone.. It functions in the pathway secondary metabolite biosynthesis; flavonoid biosynthesis. Involved in the biosynthesis of prenylated phenolics natural products which contribute to the bitter taste of beer and display broad biological activities. Involved in anthocyanin biosynthesis. Polyketide binding proteins (PBP) which reduces the catalytic activities of CHS_H1 and PT1L and prevents demethylxanthohumol (DMX) production, by binding to DMX and naringenin chalcone (NC) to stabilize the chalconoids ring-opened structure. In Humulus lupulus (European hop), this protein is Chalcone isomerase-like protein 1.